We begin with the raw amino-acid sequence, 220 residues long: 7-cyano-7-deazaguanine synthase (220 aa).

ATP is bound at residue 10–20; the sequence is FSGGQDSTTCL. Zn(2+)-binding residues include cysteine 186, cysteine 195, cysteine 198, and cysteine 201.

This sequence belongs to the QueC family. As to quaternary structure, homodimer. The cofactor is Zn(2+).

It catalyses the reaction 7-carboxy-7-deazaguanine + NH4(+) + ATP = 7-cyano-7-deazaguanine + ADP + phosphate + H2O + H(+). It participates in purine metabolism; 7-cyano-7-deazaguanine biosynthesis. Functionally, catalyzes the ATP-dependent conversion of 7-carboxy-7-deazaguanine (CDG) to 7-cyano-7-deazaguanine (preQ(0)). The chain is 7-cyano-7-deazaguanine synthase from Bacillus mycoides (strain KBAB4) (Bacillus weihenstephanensis).